We begin with the raw amino-acid sequence, 464 residues long: Rhodopsin (464 aa).

Residues 1 to 33 are Extracellular-facing; sequence MGRDIPDNETWWYNPTMEVHPHWKQFNQVPDAV. N8 carries N-linked (GlcNAc...) asparagine glycosylation. A helical membrane pass occupies residues 34 to 58; sequence YYSLGIFIGICGIIGCTGNGIVIYL. Residues 59–70 lie on the Cytoplasmic side of the membrane; it reads FTKTKSLQTPAN. Residues 71–97 form a helical membrane-spanning segment; the sequence is MFIINLAFSDFTFSLVNGFPLMTISCF. The Extracellular segment spans residues 98 to 109; the sequence is IKKWVFGMAACK. A disulfide bridge connects residues C108 and C186. A helical membrane pass occupies residues 110–131; sequence VYGFIGGIFGLMSIMTMSMISI. The short motif at 132–134 is the 'Ionic lock' involved in activated form stabilization element; it reads DRY. Topologically, residues 132–151 are cytoplasmic; the sequence is DRYNVIGRPMAASKKMSHRR. The chain crosses the membrane as a helical span at residues 152 to 172; that stretch reads AFLMIIFVWMWSTLWSIGPIF. Over 173 to 199 the chain is Extracellular; sequence GWGAYVLEGVLCNCSFDYITRDSATRS. Residues 200–224 form a helical membrane-spanning segment; the sequence is NIVCMYIFAFCFPILIIFFCYFNIV. Residues 225–261 lie on the Cytoplasmic side of the membrane; the sequence is MAVSNHEKEMAAMAKRLNAKELRKAQAGASAEMKLAK. Residues 262 to 283 form a helical membrane-spanning segment; that stretch reads ISIVIVTQFLLSWSPYAVVALL. Topologically, residues 284-293 are extracellular; the sequence is AQFGPIEWVT. Residues 294–315 traverse the membrane as a helical segment; that stretch reads PYAAQLPVMFAKASAIHNPLIY. K305 carries the N6-(retinylidene)lysine modification. The Cytoplasmic segment spans residues 316–464; sequence SVSHPKFREA…QGVDNQAYQA (149 aa). Residues C336 and C337 are each lipidated (S-palmitoyl cysteine). The segment at 344-464 is disordered; the sequence is VEDDKDAETE…QGVDNQAYQA (121 aa). Over residues 367–401 the composition is skewed to low complexity; that stretch reads AAQMKEMMAMMQKMQQQQAAYPPQGAYPPQGGYPP. Composition is skewed to pro residues over residues 416–425 and 434–452; these read QGYPPPPQGY and QGYPPPQGAPPQGAPPQAA.

This sequence belongs to the G-protein coupled receptor 1 family. Opsin subfamily. Contains one covalently linked retinal chromophore. Upon light absorption, the covalently bound 11-cis-retinal is converted to all-trans-retinal. After hydrolysis of the Schiff base and release of the covalently bound all-trans-retinal, active rhodopsin is regenerated by binding of a fresh molecule of 11-cis-retinal.

The protein resides in the cell projection. Its subcellular location is the rhabdomere membrane. Photoreceptor required for image-forming vision at low light intensity. Light-induced isomerization of 11-cis to all-trans retinal triggers a conformational change that activates signaling via G-proteins. Signaling mediates the activation of phospholipase C. Subsequent receptor phosphorylation mediates displacement of the bound G-protein alpha subunit by arrestin and terminates signaling. This Sepia officinalis (Common cuttlefish) protein is Rhodopsin (RHO).